The primary structure comprises 472 residues: Argininosuccinate lyase (472 aa).

It belongs to the lyase 1 family. Argininosuccinate lyase subfamily.

It is found in the cytoplasm. It catalyses the reaction 2-(N(omega)-L-arginino)succinate = fumarate + L-arginine. The protein operates within amino-acid biosynthesis; L-arginine biosynthesis; L-arginine from L-ornithine and carbamoyl phosphate: step 3/3. In Rhodococcus jostii (strain RHA1), this protein is Argininosuccinate lyase.